The following is a 593-amino-acid chain: SPI-1 type 3 secretion system translocon protein SctE (593 aa).

2 coiled-coil regions span residues 151–208 and 287–314; these read DTAK…ATDA and EGRQ…NRIM. 2 helical membrane passes run 330-350 and 409-429; these read VVAA…GLAV and IVGA…VAVV.

Belongs to the SctE/SipB/YopB family. In terms of assembly, the core secretion machinery of the T3SS is composed of approximately 20 different proteins, including cytoplasmic components, a base, an export apparatus and a needle. This subunit is involved in the formation of a pore, called the translocon, in host membrane.

It is found in the secreted. It localises to the host membrane. Component of the type III secretion system 1 (SPI-1 T3SS), also called injectisome, which is used to inject bacterial effector proteins into eukaryotic host cells. SipB/SctE1 and SipC/SctB are inserted into the host membrane where they form a pore and allow the translocation of effector proteins into the cytosol of target cells. This Salmonella dublin protein is SPI-1 type 3 secretion system translocon protein SctE.